Consider the following 385-residue polypeptide: Acetoin utilization protein AcuC (385 aa).

Belongs to the histone deacetylase family.

It functions in the pathway ketone degradation; acetoin degradation. Role in growth on acetoin or butanediol. Involved in the breakdown of these compounds used as a carbon source. This is Acetoin utilization protein AcuC (acuC) from Staphylococcus xylosus.